The primary structure comprises 552 residues: Chaperonin GroEL (552 aa).

Residues Thr30–Pro33, Lys51, Asp87–Thr91, Gly415, Asn479–Ala481, and Asp495 each bind ATP.

Belongs to the chaperonin (HSP60) family. In terms of assembly, forms a cylinder of 14 subunits composed of two heptameric rings stacked back-to-back. Interacts with the co-chaperonin GroES.

The protein resides in the cytoplasm. It carries out the reaction ATP + H2O + a folded polypeptide = ADP + phosphate + an unfolded polypeptide.. Its function is as follows. Together with its co-chaperonin GroES, plays an essential role in assisting protein folding. The GroEL-GroES system forms a nano-cage that allows encapsulation of the non-native substrate proteins and provides a physical environment optimized to promote and accelerate protein folding. This chain is Chaperonin GroEL, found in Nitrosospira multiformis (strain ATCC 25196 / NCIMB 11849 / C 71).